The sequence spans 233 residues: Aquaglyceroporin AqpS (233 aa).

2 consecutive transmembrane segments (helical) span residues 11–31 (VAEA…GIMA) and 40–60 (LALV…VTIL). The NPA 1 signature appears at 69–71 (NPA). Transmembrane regions (helical) follow at residues 89-109 (AYVI…HLMF), 125-145 (AQWL…LAGI), and 152-172 (VPWL…STSF). The NPA 2 motif lies at 174–176 (NPA). A helical membrane pass occupies residues 193–213 (GDLPGFVIAELLGAVCALALM).

Belongs to the MIP/aquaporin (TC 1.A.8) family. NIP (TC 1.A.8.12) subfamily.

The protein resides in the cell inner membrane. Involved in resistance to arsenic. Facilitates efflux of arsenite [As(III)]. Arsenate [As(V)] enters the cell through phosphate transport systems and is reduced to arsenite by the arsenate reductase ArsC. Internally generated arsenite flows out of the cell by downhill movement through AqpS. Can also transport the highly toxic methylarsenite [MAs(III)] and the relatively non-toxic methylarsenate [MAs(V)]. May be a component of an methylarsenite resistance pathway in which methylarsenite enters cells via AqpS, is oxidized by ArsH to methylarsenate, which exits the cells via AqpS. This pathway may confer a selective advantage for R.melliloti to grow in the presence of environmental methylarsenicals. This chain is Aquaglyceroporin AqpS, found in Rhizobium meliloti (strain 1021) (Ensifer meliloti).